The following is a 362-amino-acid chain: tRNA-specific 2-thiouridylase MnmA (362 aa).

ATP contacts are provided by residues 6–13 and Leu32; that span reads AMSGGVDS. The Nucleophile role is filled by Cys101. A disulfide bridge links Cys101 with Cys197. Gly125 lines the ATP pocket. The interaction with tRNA stretch occupies residues 147 to 149; that stretch reads KDQ. Cys197 functions as the Cysteine persulfide intermediate in the catalytic mechanism.

This sequence belongs to the MnmA/TRMU family.

It localises to the cytoplasm. The enzyme catalyses S-sulfanyl-L-cysteinyl-[protein] + uridine(34) in tRNA + AH2 + ATP = 2-thiouridine(34) in tRNA + L-cysteinyl-[protein] + A + AMP + diphosphate + H(+). Its function is as follows. Catalyzes the 2-thiolation of uridine at the wobble position (U34) of tRNA, leading to the formation of s(2)U34. The sequence is that of tRNA-specific 2-thiouridylase MnmA from Saccharopolyspora erythraea (strain ATCC 11635 / DSM 40517 / JCM 4748 / NBRC 13426 / NCIMB 8594 / NRRL 2338).